A 1892-amino-acid chain; its full sequence is Protein TIC 214 (1892 aa).

Transmembrane regions (helical) follow at residues 12-32 (LISLYMTIINSVVMVGLYYGF), 68-88 (FIAGQLMMFISIYYVPLHLAL), 89-109 (GKPHTITVLALPYLLFHFFWN), 128-148 (LSIQCVFLNNLIIQLFNHFIL), 176-196 (VGWLIGHILLMKWVGLVLVWI), and 225-245 (IFSILLFITCVYYLGRIPSPI). Over residues 256-266 (PEEVGESEEER) the composition is skewed to acidic residues. Residues 256 to 299 (PEEVGESEEERNIEIETISEGGGANQKQGTEENTSSSLFSEEEV) are disordered. The segment covering 280-294 (NQKQGTEENTSSSLF) has biased composition (polar residues). Residues 1115–1135 (FYFFINFFIEKIYMDILLYII) form a helical membrane-spanning segment. Positions 1613–1636 (SNQEKDVEEDYDKSDKKKRRKKKQ) are disordered.

This sequence belongs to the TIC214 family. Part of the Tic complex.

The protein resides in the plastid. The protein localises to the chloroplast inner membrane. Its function is as follows. Involved in protein precursor import into chloroplasts. May be part of an intermediate translocation complex acting as a protein-conducting channel at the inner envelope. The polypeptide is Protein TIC 214 (Gossypium hirsutum (Upland cotton)).